The primary structure comprises 198 residues: Nucleoid occlusion factor SlmA (198 aa).

Positions 9–70 constitute an HTH tetR-type domain; it reads RNRREEILQA…SLIEFIEDSL (62 aa). The H-T-H motif DNA-binding region spans 33 to 52; that stretch reads TTAKLAANVGVSEAALYRHF. A coiled-coil region spans residues 119 to 144; the sequence is DRLQGRINQLFERIEMQLRQVLREKK.

The protein belongs to the nucleoid occlusion factor SlmA family. As to quaternary structure, homodimer. Interacts with FtsZ.

It localises to the cytoplasm. Its subcellular location is the nucleoid. Its function is as follows. Required for nucleoid occlusion (NO) phenomenon, which prevents Z-ring formation and cell division over the nucleoid. Acts as a DNA-associated cell division inhibitor that binds simultaneously chromosomal DNA and FtsZ, and disrupts the assembly of FtsZ polymers. SlmA-DNA-binding sequences (SBS) are dispersed on non-Ter regions of the chromosome, preventing FtsZ polymerization at these regions. In Yersinia pseudotuberculosis serotype I (strain IP32953), this protein is Nucleoid occlusion factor SlmA.